A 409-amino-acid chain; its full sequence is S-adenosylmethionine synthase (409 aa).

ATP is bound at residue histidine 15. Aspartate 17 contributes to the Mg(2+) binding site. K(+) is bound at residue glutamate 43. L-methionine contacts are provided by glutamate 56 and glutamine 100. The interval 100 to 110 (QSSDIAQGVNE) is flexible loop. Residues 171 to 173 (DGK), 248 to 249 (KF), aspartate 257, 263 to 264 (RK), alanine 280, and lysine 284 contribute to the ATP site. An L-methionine-binding site is contributed by aspartate 257. Lysine 288 contributes to the L-methionine binding site.

Belongs to the AdoMet synthase family. In terms of assembly, homotetramer; dimer of dimers. Requires Mg(2+) as cofactor. K(+) is required as a cofactor.

It localises to the cytoplasm. The catalysed reaction is L-methionine + ATP + H2O = S-adenosyl-L-methionine + phosphate + diphosphate. Its pathway is amino-acid biosynthesis; S-adenosyl-L-methionine biosynthesis; S-adenosyl-L-methionine from L-methionine: step 1/1. In terms of biological role, catalyzes the formation of S-adenosylmethionine (AdoMet) from methionine and ATP. The overall synthetic reaction is composed of two sequential steps, AdoMet formation and the subsequent tripolyphosphate hydrolysis which occurs prior to release of AdoMet from the enzyme. This is S-adenosylmethionine synthase from Prochlorococcus marinus (strain NATL2A).